We begin with the raw amino-acid sequence, 237 residues long: UPF0053 protein HI_0056 (237 aa).

Transmembrane regions (helical) follow at residues 12-32 (ISLV…IIFI), 49-69 (ILGL…LAWI), 90-110 (ILLI…KEAI), 126-146 (YLGV…DSVI), 151-171 (MASH…VMMF), 188-208 (ILAL…SLDI), and 210-230 (IPKG…MINI).

The protein belongs to the UPF0053 family.

Its subcellular location is the cell membrane. This Haemophilus influenzae (strain ATCC 51907 / DSM 11121 / KW20 / Rd) protein is UPF0053 protein HI_0056.